A 281-amino-acid chain; its full sequence is Pantothenate synthetase (281 aa).

Position 31–38 (31–38 (MGNLHAGH)) interacts with ATP. H38 acts as the Proton donor in catalysis. Q62 lines the (R)-pantoate pocket. Position 62 (Q62) interacts with beta-alanine. 150–153 (GKKD) lines the ATP pocket. Q156 provides a ligand contact to (R)-pantoate. ATP is bound by residues V179 and 187–190 (MSSR).

It belongs to the pantothenate synthetase family. As to quaternary structure, homodimer.

The protein resides in the cytoplasm. The enzyme catalyses (R)-pantoate + beta-alanine + ATP = (R)-pantothenate + AMP + diphosphate + H(+). It functions in the pathway cofactor biosynthesis; (R)-pantothenate biosynthesis; (R)-pantothenate from (R)-pantoate and beta-alanine: step 1/1. Functionally, catalyzes the condensation of pantoate with beta-alanine in an ATP-dependent reaction via a pantoyl-adenylate intermediate. The chain is Pantothenate synthetase from Xylella fastidiosa (strain 9a5c).